We begin with the raw amino-acid sequence, 158 residues long: S-ribosylhomocysteine lyase (158 aa).

The Fe cation site is built by His-54, His-58, and Cys-124.

This sequence belongs to the LuxS family. In terms of assembly, homodimer. Requires Fe cation as cofactor.

The enzyme catalyses S-(5-deoxy-D-ribos-5-yl)-L-homocysteine = (S)-4,5-dihydroxypentane-2,3-dione + L-homocysteine. In terms of biological role, involved in the synthesis of autoinducer 2 (AI-2) which is secreted by bacteria and is used to communicate both the cell density and the metabolic potential of the environment. The regulation of gene expression in response to changes in cell density is called quorum sensing. Catalyzes the transformation of S-ribosylhomocysteine (RHC) to homocysteine (HC) and 4,5-dihydroxy-2,3-pentadione (DPD). This is S-ribosylhomocysteine lyase from Lactobacillus gasseri (strain ATCC 33323 / DSM 20243 / BCRC 14619 / CIP 102991 / JCM 1131 / KCTC 3163 / NCIMB 11718 / NCTC 13722 / AM63).